Here is a 114-residue protein sequence, read N- to C-terminus: MEMVNKIACFVLLCMVVVAPHAEALTCGQVTSTLAPCLPYLMNRGPLGGCCGGVKGLLGQAQTTVDRQTACTCLKSAASSFTGLDLGKAASLPSTCSVNIPYKISPSTDCSKVQ.

A signal peptide spans 1–23 (MEMVNKIACFVLLCMVVVAPHAE). Cystine bridges form between cysteine 27/cysteine 73, cysteine 37/cysteine 50, cysteine 51/cysteine 96, and cysteine 71/cysteine 110.

It belongs to the plant LTP family.

Plant non-specific lipid-transfer proteins transfer phospholipids as well as galactolipids across membranes. May play a role in wax or cutin deposition in the cell walls of expanding epidermal cells and certain secretory tissues. This Solanum pennellii (Tomato) protein is Non-specific lipid-transfer protein 2 (LTP2).